The primary structure comprises 1393 residues: DNA-directed RNA polymerase subunit beta' (1393 aa).

Zn(2+) is bound by residues C71, C73, C86, and C89. Mg(2+)-binding residues include D462, D464, and D466. Zn(2+)-binding residues include C811, C885, C892, and C895.

This sequence belongs to the RNA polymerase beta' chain family. In terms of assembly, the RNAP catalytic core consists of 2 alpha, 1 beta, 1 beta' and 1 omega subunit. When a sigma factor is associated with the core the holoenzyme is formed, which can initiate transcription. Mg(2+) serves as cofactor. The cofactor is Zn(2+).

It carries out the reaction RNA(n) + a ribonucleoside 5'-triphosphate = RNA(n+1) + diphosphate. In terms of biological role, DNA-dependent RNA polymerase catalyzes the transcription of DNA into RNA using the four ribonucleoside triphosphates as substrates. This is DNA-directed RNA polymerase subunit beta' from Azorhizobium caulinodans (strain ATCC 43989 / DSM 5975 / JCM 20966 / LMG 6465 / NBRC 14845 / NCIMB 13405 / ORS 571).